A 310-amino-acid polypeptide reads, in one-letter code: Pyrimidine-specific ribonucleoside hydrolase RihA (310 aa).

His240 is a catalytic residue.

It belongs to the IUNH family. RihA subfamily.

Its function is as follows. Hydrolyzes cytidine or uridine to ribose and cytosine or uracil, respectively. The protein is Pyrimidine-specific ribonucleoside hydrolase RihA of Photobacterium profundum (strain SS9).